Here is a 269-residue protein sequence, read N- to C-terminus: Ribonuclease HII (269 aa).

The region spanning 61–250 (RLVCGVDEAG…VRKMLSPGLE (190 aa)) is the RNase H type-2 domain. A divalent metal cation-binding residues include Asp-67, Glu-68, and Asp-158.

It belongs to the RNase HII family. It depends on Mn(2+) as a cofactor. The cofactor is Mg(2+).

Its subcellular location is the cytoplasm. The catalysed reaction is Endonucleolytic cleavage to 5'-phosphomonoester.. Functionally, endonuclease that specifically degrades the RNA of RNA-DNA hybrids. In Parvibaculum lavamentivorans (strain DS-1 / DSM 13023 / NCIMB 13966), this protein is Ribonuclease HII.